A 235-amino-acid chain; its full sequence is Clathrin light chain A (235 aa).

The interval 1 to 32 (MAELDPFGAPAGAPGGPALGNGVAGAGEEDPA) is disordered. Over residues 13–25 (APGGPALGNGVAG) the composition is skewed to gly residues. Residues 99 to 161 (VDRLQSEPES…QLQKTKANNR (63 aa)) form an involved in binding clathrin heavy chain region. Serine 104 and serine 193 each carry phosphoserine. Position 210 is an N6-acetyllysine (lysine 210). A Phosphoserine modification is found at serine 223. N6-acetyllysine is present on lysine 229.

The protein belongs to the clathrin light chain family. As to quaternary structure, clathrin coats are formed from molecules containing 3 heavy chains and 3 light chains. Interacts with CALY; the interaction stimulates clathrin self-assembly and clathrin-mediated endocytosis. Interacts with CKAP5 and TACC3 forming the TACC3/ch-TOG/clathrin complex located at spindle inter-microtubules bridges; the complex implicates clathrin triskelions.

Its subcellular location is the cytoplasmic vesicle membrane. It localises to the membrane. The protein resides in the coated pit. It is found in the cytoplasm. The protein localises to the cytoskeleton. Its subcellular location is the spindle. In terms of biological role, clathrin is the major protein of the polyhedral coat of coated pits and vesicles. Acts as a component of the TACC3/ch-TOG/clathrin complex proposed to contribute to stabilization of kinetochore fibers of the mitotic spindle by acting as inter-microtubule bridge. This Mus musculus (Mouse) protein is Clathrin light chain A (Clta).